A 161-amino-acid chain; its full sequence is S-ribosylhomocysteine lyase (161 aa).

The Fe cation site is built by His58, His62, and Cys128.

This sequence belongs to the LuxS family. In terms of assembly, homodimer. Requires Fe cation as cofactor.

The catalysed reaction is S-(5-deoxy-D-ribos-5-yl)-L-homocysteine = (S)-4,5-dihydroxypentane-2,3-dione + L-homocysteine. Functionally, involved in the synthesis of autoinducer 2 (AI-2) which is secreted by bacteria and is used to communicate both the cell density and the metabolic potential of the environment. The regulation of gene expression in response to changes in cell density is called quorum sensing. Catalyzes the transformation of S-ribosylhomocysteine (RHC) to homocysteine (HC) and 4,5-dihydroxy-2,3-pentadione (DPD). The protein is S-ribosylhomocysteine lyase of Bifidobacterium adolescentis (strain ATCC 15703 / DSM 20083 / NCTC 11814 / E194a).